Reading from the N-terminus, the 319-residue chain is Protein SICKLE (319 aa).

3 disordered regions span residues 1-59 (MEDS…TQRF), 71-239 (SFKK…PGAE), and 262-299 (CSDA…SNQQ). Composition is skewed to polar residues over residues 27–56 (TTGT…SFET) and 78–88 (PKQQYISSPSH). Positions 93 to 103 (PVPPQFPPSVP) are enriched in pro residues. Over residues 185-210 (SYNNTPPQFSNYGRQNANWGGNTYPN) the composition is skewed to polar residues. The span at 228 to 238 (DGGRRPMEPGA) shows a compositional bias: basic and acidic residues. Over residues 285 to 299 (SVTSEATHKTSSNQQ) the composition is skewed to polar residues.

As to quaternary structure, interacts with ubiquitin thioesterases UBP12 and UBP13, and with protein phosphatase 2A subunits PP2AB1, PP2AB2, PP2A3, PP2A4, PP2AA1 and PP2AA2. Expressed in the shoot apical meristem (SAM), embryos, seedlings, root tips, and root and leaf primordia.

It is found in the nucleus. The protein localises to the cytoplasm. It localises to the cytosol. Involved in miRNAs and siRNAs biogenesis and thus promotes gene silencing. Modulates auxin (IAA) transport-related developmental programs by regulating protein phosphatase 2A (PP2As)-driven auxin efflux carrier PIN proteins recycling and polarity. Required during development. Necessary for abiotic stress (e.g. chilling and salt) tolerance. The sequence is that of Protein SICKLE from Arabidopsis thaliana (Mouse-ear cress).